The sequence spans 920 residues: Zinc finger MIZ domain-containing protein 2 (920 aa).

Disordered regions lie at residues 1–22 and 54–79; these read MNSMNPMKPALPPAPHGDGSFA and SQVLGNPMGPAGSPSGSSMMPGVAGG. Low complexity predominate over residues 60–79; sequence PMGPAGSPSGSSMMPGVAGG. R111 is modified (omega-N-methylarginine). 2 disordered regions span residues 243–265 and 286–391; these read GQRLPQHGYPGPPQAQPLPRQGV and PSTA…SPNQ. 2 positions are modified to asymmetric dimethylarginine: R245 and R262. Over residues 295 to 304 the composition is skewed to pro residues; it reads PGQPPAPSPS. Over residues 334–354 the composition is skewed to polar residues; it reads EQFNGQGASFNGGSVSYSQPG. Pro residues predominate over residues 366-379; sequence PSSPLPGNPTPPMT. Residues 380 to 389 are compositionally biased toward low complexity; it reads PSSSVPYMSP. Residues K402 and K457 each participate in a glycyl lysine isopeptide (Lys-Gly) (interchain with G-Cter in SUMO2) cross-link. The tract at residues 435-506 is interaction with AR; that stretch reads PFRLQHNLAV…TIERGDNKTS (72 aa). The SP-RING-type zinc finger occupies 585–671; that stretch reads GEDGVEQTAI…IYIQNSDYEE (87 aa). Zn(2+)-binding residues include C616, H618, C639, and C642. K692 is covalently cross-linked (Glycyl lysine isopeptide (Lys-Gly) (interchain with G-Cter in SUMO2)). A disordered region spans residues 803–920; it reads SQMAPAGHLD…DDLLSLFENN (118 aa). Low complexity predominate over residues 876 to 890; the sequence is AGEAPEPALDLLPEL. A compositionally biased stretch (polar residues) spans 906 to 920; it reads PTNNNDDLLSLFENN.

Interacts with AR, SMARCA4/BRG1 and SMARCE1/BAF57. Interaction with either SMARCA4 and SMARCE1 enhances AR-mediated transcription. Expressed most abundantly in testis with lower levels in heart, brain, pancreas, prostate and ovary.

The protein resides in the nucleus. In terms of biological role, increases ligand-dependent transcriptional activity of AR and other nuclear hormone receptors. This chain is Zinc finger MIZ domain-containing protein 2 (ZMIZ2), found in Homo sapiens (Human).